The sequence spans 651 residues: Apical membrane antigen 1-like protein (651 aa).

Positions 1–41 are cleaved as a signal peptide; the sequence is MPTESRSILARAEETRCRHLSRLLRAGLVFLLCDVLTSCLA. Residues 42–81 constitute a propeptide, removed in mature form; the sequence is TPELQNTVIRSSKAHHLQLLFSSRSTPAVKFPLDATLSAP. At 42 to 570 the chain is on the extracellular side; the sequence is TPELQNTVIR…VEKEGSGGNT (529 aa). 7 cysteine pairs are disulfide-bonded: C141–C309, C215–C248, C264–C277, C327–C417, C347–C408, C441–C463, and C453–C475. N230 carries N-linked (GlcNAc...) asparagine glycosylation. A 1; approximate repeat occupies 483–486; sequence PPVK. The 12 x 4 AA approximate tandem-repeats of P-P-V-E stretch occupies residues 483 to 531; the sequence is PPVKPPVEPPVEPPVEPPVEPPVEPPVEPPVEPPVEPPVEPPVVEPPTE. Pro residues predominate over residues 483–547; it reads PPVKPPVEPP…EPPVVLPPTP (65 aa). The tract at residues 483-567 is disordered; the sequence is PPVKPPVEPP…DETVEKEGSG (85 aa). 9 repeat units span residues 487 to 490, 491 to 494, 495 to 498, 499 to 502, 503 to 506, 507 to 510, 511 to 514, 515 to 518, and 519 to 522. An 11; approximate repeat occupies 523–527; sequence PPVVE. The stretch at 528–531 is one 12; approximate repeat; that stretch reads PPTE. Residues 571 to 591 form a helical membrane-spanning segment; sequence ALIAGSVLGMLIILALVGTCV. The Cytoplasmic portion of the chain corresponds to 592 to 651; the sequence is GFYYRKRPLPPTERPTVEASGGREVEGPSDVAVPPDHSWWGEGEHETESLLGSRAVDAEF. The segment at 598-651 is disordered; it reads RPLPPTERPTVEASGGREVEGPSDVAVPPDHSWWGEGEHETESLLGSRAVDAEF.

Belongs to the apicomplexan parasites AMA1 family. In terms of processing, proteolytically cleaved within its transmembrane domain, releasing a soluble form from the cell surface.

The protein resides in the cell membrane. It is found in the secreted. In terms of biological role, may play a role in host cell invasion. In Toxoplasma gondii (strain ATCC 50861 / VEG), this protein is Apical membrane antigen 1-like protein.